The chain runs to 85 residues: Large ribosomal subunit protein bL31B (85 aa).

This sequence belongs to the bacterial ribosomal protein bL31 family. Type B subfamily. In terms of assembly, part of the 50S ribosomal subunit.

The chain is Large ribosomal subunit protein bL31B from Porphyromonas gingivalis (strain ATCC 33277 / DSM 20709 / CIP 103683 / JCM 12257 / NCTC 11834 / 2561).